A 187-amino-acid polypeptide reads, in one-letter code: Large ribosomal subunit protein uL5 (187 aa).

The protein belongs to the universal ribosomal protein uL5 family. Part of the 50S ribosomal subunit; part of the 5S rRNA/L5/L18/L25 subcomplex. Contacts the 5S rRNA and the P site tRNA. Forms a bridge to the 30S subunit in the 70S ribosome.

Its function is as follows. This is one of the proteins that bind and probably mediate the attachment of the 5S RNA into the large ribosomal subunit, where it forms part of the central protuberance. In the 70S ribosome it contacts protein S13 of the 30S subunit (bridge B1b), connecting the 2 subunits; this bridge is implicated in subunit movement. Contacts the P site tRNA; the 5S rRNA and some of its associated proteins might help stabilize positioning of ribosome-bound tRNAs. This is Large ribosomal subunit protein uL5 from Mycobacterium sp. (strain JLS).